We begin with the raw amino-acid sequence, 146 residues long: MTLTKGSFTYSSGEEYRGEWKEGRRHGFGQLMFADGGTYLGHFENGLFNGFGVLTFSDGSRYEGEFAQGKFNGVGVFIRHDNMTFEGEFKNGRVDGLGLLTFPDGSHGIPRNEGLFENNKLLRREKCSAVVQRAQSASKSARSLTA.

4 MORN repeats span residues 16 to 38 (YRGE…DGGT), 39 to 61 (YLGH…DGSR), 62 to 84 (YEGE…DNMT), and 85 to 107 (FEGE…DGSH).

In terms of assembly, interacts with MYO3A. In terms of tissue distribution, retina.

It is found in the cytoplasm. The protein localises to the cell projection. Its subcellular location is the filopodium tip. The protein resides in the stereocilium. Functionally, plays a role in promoting axonal degeneration following neuronal injury by toxic insult or trauma. This Bos taurus (Bovine) protein is MORN repeat-containing protein 4 (MORN4).